We begin with the raw amino-acid sequence, 954 residues long: Translation initiation factor IF-2 (954 aa).

Residues 56–75 (KAAAPAAPKAPAPAAESRPA) show a composition bias toward low complexity. The disordered stretch occupies residues 56-355 (KAAAPAAPKA…GVSVPRGDGN (300 aa)). Residues 76 to 87 (APAPGPAAPKAP) show a composition bias toward pro residues. 2 stretches are compositionally biased toward low complexity: residues 88 to 125 (APKV…KPGA) and 138 to 151 (PRQG…SAPR). Residues 241–254 (PGAPRPGGPRPTPG) show a composition bias toward pro residues. The span at 269-322 (GRPGGGGRGPGRPGAPGTGGPGGGGGAPAGGGFGKGGRGRGGTQGAFGKGGAGR) shows a compositional bias: gly residues. Basic residues predominate over residues 323-332 (GKQRKSKRAK). In terms of domain architecture, tr-type G spans 447 to 618 (PRAPVVTVMG…AVLLTADAAL (172 aa)). A G1 region spans residues 456 to 463 (GHVDHGKT). A GTP-binding site is contributed by 456-463 (GHVDHGKT). The interval 481 to 485 (GITQH) is G2. A G3 region spans residues 506–509 (DTPG). GTP contacts are provided by residues 506-510 (DTPGH) and 560-563 (NKID). A G4 region spans residues 560–563 (NKID). The interval 596–598 (SAR) is G5.

The protein belongs to the TRAFAC class translation factor GTPase superfamily. Classic translation factor GTPase family. IF-2 subfamily.

Its subcellular location is the cytoplasm. In terms of biological role, one of the essential components for the initiation of protein synthesis. Protects formylmethionyl-tRNA from spontaneous hydrolysis and promotes its binding to the 30S ribosomal subunits. Also involved in the hydrolysis of GTP during the formation of the 70S ribosomal complex. The sequence is that of Translation initiation factor IF-2 from Pseudarthrobacter chlorophenolicus (strain ATCC 700700 / DSM 12829 / CIP 107037 / JCM 12360 / KCTC 9906 / NCIMB 13794 / A6) (Arthrobacter chlorophenolicus).